The following is a 532-amino-acid chain: Membrane protein insertase YidC (532 aa).

Helical transmembrane passes span 7 to 27, 336 to 356, 413 to 433, 450 to 470, and 492 to 512; these read FFIFAFLFVSFLLWQAWQSQM, LTILYSIIGNWGFSIILITFI, GGFLPIFIQMPIFLSLYYMLI, LSSQDPYYVLPVIMGLTMFFI, and PVIFTAFFLWFPSGLVLYYII.

This sequence belongs to the OXA1/ALB3/YidC family. Type 1 subfamily. Interacts with the Sec translocase complex via SecD. Specifically interacts with transmembrane segments of nascent integral membrane proteins during membrane integration.

Its subcellular location is the cell membrane. Its function is as follows. Required for the insertion and/or proper folding and/or complex formation of integral membrane proteins into the membrane. Involved in integration of membrane proteins that insert both dependently and independently of the Sec translocase complex, as well as at least some lipoproteins. Aids folding of multispanning membrane proteins. In Buchnera aphidicola subsp. Acyrthosiphon pisum (strain 5A), this protein is Membrane protein insertase YidC.